A 181-amino-acid chain; its full sequence is Transcriptional repressor NrdR (181 aa).

A zinc finger lies at 3-34; sequence CPYCQHTDSRVLESRSTGAGRSIRRRRECLSC. Positions 49–139 constitute an ATP-cone domain; the sequence is ISVIKRNGQS…VYRQFQGVDD (91 aa).

Belongs to the NrdR family. The cofactor is Zn(2+).

Functionally, negatively regulates transcription of bacterial ribonucleotide reductase nrd genes and operons by binding to NrdR-boxes. The chain is Transcriptional repressor NrdR from Picosynechococcus sp. (strain ATCC 27264 / PCC 7002 / PR-6) (Agmenellum quadruplicatum).